Reading from the N-terminus, the 89-residue chain is Small ribosomal subunit protein uS15 (89 aa).

Belongs to the universal ribosomal protein uS15 family. In terms of assembly, part of the 30S ribosomal subunit. Forms a bridge to the 50S subunit in the 70S ribosome, contacting the 23S rRNA.

One of the primary rRNA binding proteins, it binds directly to 16S rRNA where it helps nucleate assembly of the platform of the 30S subunit by binding and bridging several RNA helices of the 16S rRNA. Functionally, forms an intersubunit bridge (bridge B4) with the 23S rRNA of the 50S subunit in the ribosome. In Klebsiella pneumoniae (strain 342), this protein is Small ribosomal subunit protein uS15.